An 87-amino-acid chain; its full sequence is Small ribosomal subunit protein uS17 (87 aa).

Belongs to the universal ribosomal protein uS17 family. In terms of assembly, part of the 30S ribosomal subunit.

In terms of biological role, one of the primary rRNA binding proteins, it binds specifically to the 5'-end of 16S ribosomal RNA. The protein is Small ribosomal subunit protein uS17 of Geobacillus stearothermophilus (Bacillus stearothermophilus).